A 119-amino-acid chain; its full sequence is Large ribosomal subunit protein bL20 (119 aa).

It belongs to the bacterial ribosomal protein bL20 family.

Its function is as follows. Binds directly to 23S ribosomal RNA and is necessary for the in vitro assembly process of the 50S ribosomal subunit. It is not involved in the protein synthesizing functions of that subunit. The protein is Large ribosomal subunit protein bL20 of Nitrosomonas eutropha (strain DSM 101675 / C91 / Nm57).